The chain runs to 2477 residues: Non-reducing polyketide synthase mapC (2477 aa).

The tract at residues 14–269 (LLFGPQCSEI…HQQTHREGIQ (256 aa)) is N-terminal acylcarrier protein transacylase domain (SAT). A Ketosynthase family 3 (KS3) domain is found at 403-820 (MPPIAITGMA…GSNAALIVRD (418 aa)). Residues cysteine 568, histidine 703, and histidine 742 each act as for beta-ketoacyl synthase activity in the active site. Residues 930 to 1233 (LCFGGQNGVT…HRVNLDGSDG (304 aa)) are malonyl-CoA:ACP transacylase (MAT) domain. The active-site For acyl/malonyl transferase activity is the serine 1017. An N-terminal hotdog fold region spans residues 1302 to 1435 (QERAGLLRKL…GSVSLCNERS (134 aa)). In terms of domain architecture, PKS/mFAS DH spans 1302 to 1612 (QERAGLLRKL…FMSVSIRSLT (311 aa)). The segment at 1307-1611 (LLRKLSDGPE…RFMSVSIRSL (305 aa)) is product template (PT) domain. Histidine 1336 (proton acceptor; for dehydratase activity) is an active-site residue. The C-terminal hotdog fold stretch occupies residues 1461–1612 (ASNGLKGSTV…FMSVSIRSLT (152 aa)). The active-site Proton donor; for dehydratase activity is aspartate 1518. Positions 1651 to 1725 (DSDLVAVQEM…GLTEHIFPGH (75 aa)) constitute a Carrier domain. Serine 1685 carries the O-(pantetheine 4'-phosphoryl)serine modification. Residues 1882-2117 (PYALEHDLLQ…GFEWVGWTNN (236 aa)) are methyltransferase (CMeT) domain. Active-site for thioesterase activity residues include serine 2267 and aspartate 2421.

The protein localises to the cytoplasm. Its subcellular location is the cytosol. The enzyme catalyses 3 malonyl-CoA + acetyl-CoA + S-adenosyl-L-methionine + H(+) = 5-methylorsellinate + S-adenosyl-L-homocysteine + 3 CO2 + 4 CoA. Its pathway is secondary metabolite biosynthesis; terpenoid biosynthesis. Non-reducing polyketide synthase; part of the gene cluster that mediates the biosynthesis of mycophenolic acid (MPA), the first isolated antibiotic natural product in the world obtained from a culture of Penicillium brevicompactum in 1893. MpaC catalyzes the synthesis of 5-methylorsellinic acid (5MOA) via the condensation of 1 acetyl-CoA starter unit with 3 malonyl-CoA units and one methylation step. The first step of the pathway is the synthesis of 5-methylorsellinic acid (5MOA) by the cytosolic polyketide synthase mpaC. 5MOA is then converted to the phthalide compound 5,7-dihydroxy-4,6-dimethylphthalide (DHMP) by the endoplasmic reticulum-bound cytochrome P450 monooxygenase mpaDE. MpaDE first catalyzes hydroxylation of 5-MOA to 4,6-dihydroxy-2-(hydroxymethyl)-3-methylbenzoic acid (DHMB). MpaDE then acts as a lactone synthase that catalyzes the ring closure to convert DHMB into DHMP. The next step is the prenylation of DHMP by the Golgi apparatus-associated prenyltransferase mpaA to yield farnesyl-DHMP (FDHMP). The ER-bound oxygenase mpaB then mediates the oxidative cleavage the C19-C20 double bond in FDHMP to yield FDHMP-3C via a mycophenolic aldehyde intermediate. The O-methyltransferase mpaG catalyzes the methylation of FDHMP-3C to yield MFDHMP-3C. After the cytosolic methylation of FDHMP-3C, MFDHMP-3C enters into peroxisomes probably via free diffusion due to its low molecular weight. Upon a peroxisomal CoA ligation reaction, catalyzed by a beta-oxidation component enzyme acyl-CoA ligase ACL891, MFDHMP-3C-CoA would then be restricted to peroxisomes for the following beta-oxidation pathway steps. The peroxisomal beta-oxidation machinery than converts MFDHMP-3C-CoA into MPA_CoA, via a beta-oxidation chain-shortening process. Finally mpaH acts as a peroxisomal acyl-CoA hydrolase with high substrate specificity toward MPA-CoA to release the final product MPA. This Penicillium roqueforti (strain FM164) protein is Non-reducing polyketide synthase mapC.